We begin with the raw amino-acid sequence, 369 residues long: Putative 2-aminoethylphosphonate import ATP-binding protein PhnT (369 aa).

In terms of domain architecture, ABC transporter spans 19-250; sequence IVLDSLRVAY…PPNRFAAEFL (232 aa). 51–58 contributes to the ATP binding site; sequence GPSGSGKT.

It belongs to the ABC transporter superfamily. 2-aminoethylphosphonate importer (TC 3.A.1.11.5) family.

Its subcellular location is the cell inner membrane. Functionally, probably part of the PhnSTUV complex (TC 3.A.1.11.5) involved in 2-aminoethylphosphonate import. Probably responsible for energy coupling to the transport system. The protein is Putative 2-aminoethylphosphonate import ATP-binding protein PhnT (phnT) of Salmonella typhimurium (strain LT2 / SGSC1412 / ATCC 700720).